The chain runs to 141 residues: Hemoglobin subunit alpha-D (141 aa).

In terms of domain architecture, Globin spans 1-141 (MLTAEDKKLI…VAAVLAEKYR (141 aa)). Histidine 58 and histidine 87 together coordinate heme b.

It belongs to the globin family. As to quaternary structure, heterotetramer of two alpha-D chains and two beta chains. Red blood cells.

Its function is as follows. Involved in oxygen transport from the lung to the various peripheral tissues. The sequence is that of Hemoglobin subunit alpha-D (HBAD) from Cairina moschata (Muscovy duck).